The following is a 127-amino-acid chain: Small ribosomal subunit protein eS8 (127 aa).

Belongs to the eukaryotic ribosomal protein eS8 family. Part of the 30S ribosomal subunit.

In Pyrococcus horikoshii (strain ATCC 700860 / DSM 12428 / JCM 9974 / NBRC 100139 / OT-3), this protein is Small ribosomal subunit protein eS8 (rps8e).